Consider the following 377-residue polypeptide: Carbamoyl phosphate synthase small chain (377 aa).

The segment at 1-186 (MSTPALLVLA…LGKGFVTPDE (186 aa)) is CPSase. L-glutamine-binding residues include Ser47, Gly238, and Gly240. The 188-residue stretch at 190 to 377 (HVVAYDFGVK…IGNMKAAKRA (188 aa)) folds into the Glutamine amidotransferase type-1 domain. Catalysis depends on Cys266, which acts as the Nucleophile. Leu267, Gln270, Asn308, Gly310, and Phe311 together coordinate L-glutamine. Residues His350 and Glu352 contribute to the active site.

Belongs to the CarA family. As to quaternary structure, composed of two chains; the small (or glutamine) chain promotes the hydrolysis of glutamine to ammonia, which is used by the large (or ammonia) chain to synthesize carbamoyl phosphate. Tetramer of heterodimers (alpha,beta)4.

The enzyme catalyses hydrogencarbonate + L-glutamine + 2 ATP + H2O = carbamoyl phosphate + L-glutamate + 2 ADP + phosphate + 2 H(+). It catalyses the reaction L-glutamine + H2O = L-glutamate + NH4(+). The protein operates within amino-acid biosynthesis; L-arginine biosynthesis; carbamoyl phosphate from bicarbonate: step 1/1. It functions in the pathway pyrimidine metabolism; UMP biosynthesis via de novo pathway; (S)-dihydroorotate from bicarbonate: step 1/3. Functionally, small subunit of the glutamine-dependent carbamoyl phosphate synthetase (CPSase). CPSase catalyzes the formation of carbamoyl phosphate from the ammonia moiety of glutamine, carbonate, and phosphate donated by ATP, constituting the first step of 2 biosynthetic pathways, one leading to arginine and/or urea and the other to pyrimidine nucleotides. The small subunit (glutamine amidotransferase) binds and cleaves glutamine to supply the large subunit with the substrate ammonia. The polypeptide is Carbamoyl phosphate synthase small chain (Neisseria meningitidis serogroup A / serotype 4A (strain DSM 15465 / Z2491)).